The chain runs to 65 residues: Large ribosomal subunit protein bL35 (65 aa).

The disordered stretch occupies residues 1-26 (MPKIKTVRGAAKRFKKTASGGFKRKQ). The span at 10 to 26 (AAKRFKKTASGGFKRKQ) shows a compositional bias: basic residues.

Belongs to the bacterial ribosomal protein bL35 family.

This Haemophilus ducreyi (strain 35000HP / ATCC 700724) protein is Large ribosomal subunit protein bL35.